A 548-amino-acid chain; its full sequence is ADP,ATP carrier protein 1 (548 aa).

2 helical membrane-spanning segments follow: residues 39–59 (RPVF…YSVS) and 75–95 (SIPY…VFSI). A glycan (N-linked (GlcNAc...) asparagine) is linked at asparagine 101. Transmembrane regions (helical) follow at residues 107–127 (VFSI…TVLM), 149–169 (MVFM…SWTS), 171–191 (LMYL…FFAL), 204–224 (FIPL…FSMK), 239–259 (LFFR…IYLI), 302–322 (LVLA…MVEA), 350–370 (IQLA…PALI), and 374–394 (GFLY…ASVF). N-linked (GlcNAc...) asparagine glycosylation is found at asparagine 400 and asparagine 406. Residues 410–430 (LGFVSIGENLWLEQLLGAIIV) form a helical membrane-spanning segment. Asparagine 488 carries an N-linked (GlcNAc...) asparagine glycan. Residues 494–514 (KAAISSLTIVTVITACWGFAV) traverse the membrane as a helical segment.

It belongs to the ADP/ATP translocase tlc family.

Its subcellular location is the cell membrane. Functionally, ATP transporter involved in the uptake of ATP from the host cell cytoplasm. Provides the microsporidian cell with host ATP in exchange for ADP. This is an obligate exchange system. This energy acquiring activity is an important component of microsporidian parasitism. In Paranosema grylli (Microsporidian parasite), this protein is ADP,ATP carrier protein 1 (ANC1).